The following is a 917-amino-acid chain: Smoothelin (917 aa).

At A2 the chain carries N-acetylalanine. The stretch at 24–89 forms a coiled coil; it reads LAERRRIRSA…ARLAGQLESM (66 aa). The tract at residues 157–456 is disordered; the sequence is EVPEREEQEQ…AVGTAEPGGS (300 aa). Residues 177-188 are compositionally biased toward polar residues; that stretch reads PEGTSQDVTTVT. Composition is skewed to low complexity over residues 193–210 and 220–232; these read APPG…SSPT and PAEA…EVPG. The span at 233-243 shows a compositional bias: pro residues; the sequence is SPEPPPSPPKT. Over residues 244-258 the composition is skewed to low complexity; it reads TSPEPQESPTLPSTE. Positions 298–326 are enriched in polar residues; sequence RSLSVLSPRQPAQNRESTPLASGPSSFQR. 3 positions are modified to phosphoserine: S299, S301, and S304. Over residues 329–338 the composition is skewed to basic and acidic residues; the sequence is SVRDRVHKFT. Phosphoserine is present on S341. T351 carries the post-translational modification Phosphothreonine. A Phosphoserine modification is found at S357. 2 positions are modified to phosphothreonine: T360 and T373. The span at 363–392 shows a compositional bias: low complexity; it reads RLLGPSLTSTTPASSSSGSSSRGPSDTSSR. A phosphoserine mark is found at S503, S514, S523, and S576. Disordered stretches follow at residues 560 to 580 and 617 to 767; these read ANGA…PLSA and QRKR…RKAM. A coiled-coil region spans residues 603 to 630; it reads EERKLIRAALRELRQRKRDQRDKERERR. Residues 617–640 show a composition bias toward basic and acidic residues; sequence QRKRDQRDKERERRLQEARGRPGE. Residues 676–689 show a composition bias toward polar residues; that stretch reads NDGTRTARTTTVES. Low complexity predominate over residues 701–720; the sequence is STMMQTKTFSSSSSSKKMGS. S729 carries the phosphoserine modification. Basic and acidic residues predominate over residues 738 to 750; sequence LEKRQAEKKKELM. The residue at position 792 (S792) is a Phosphoserine. Residues 799-906 form the Calponin-homology (CH) domain; sequence NSIKQMLLDW…YVQSLYNHLR (108 aa).

Belongs to the smoothelin family. In terms of tissue distribution, smooth muscle; contractile or vascular (for the long form).

Its subcellular location is the cytoplasm. The protein resides in the cytoskeleton. Functionally, structural protein of the cytoskeleton. The protein is Smoothelin (SMTN) of Homo sapiens (Human).